Consider the following 361-residue polypeptide: tRNA(Ile)-lysidine synthase (361 aa).

32 to 37 (SGGPDS) is an ATP binding site.

Belongs to the tRNA(Ile)-lysidine synthase family.

Its subcellular location is the cytoplasm. The catalysed reaction is cytidine(34) in tRNA(Ile2) + L-lysine + ATP = lysidine(34) in tRNA(Ile2) + AMP + diphosphate + H(+). Ligates lysine onto the cytidine present at position 34 of the AUA codon-specific tRNA(Ile) that contains the anticodon CAU, in an ATP-dependent manner. Cytidine is converted to lysidine, thus changing the amino acid specificity of the tRNA from methionine to isoleucine. The polypeptide is tRNA(Ile)-lysidine synthase (Bradyrhizobium diazoefficiens (strain JCM 10833 / BCRC 13528 / IAM 13628 / NBRC 14792 / USDA 110)).